The primary structure comprises 211 residues: MGGRFIVFEGVEGCGKTSQMQLCAEWLQSLGISVVLTREPGGTELGLDLRRLLLQKAEDKPIAEVTELLLYAADRAQHVAQELKPKLAQGKYILCDRYVDSTIAYQGYGRNLDMNLIHQLNDIATGGLTSDITIWLDVDVEVGLARKRGDNVGLDRIEQETIAFHRRVQQGYADLAASSPKRIIRVDGQLSKETVHKTIQEILSVHLKQWL.

Gly10–Thr17 provides a ligand contact to ATP.

The protein belongs to the thymidylate kinase family.

The enzyme catalyses dTMP + ATP = dTDP + ADP. Its function is as follows. Phosphorylation of dTMP to form dTDP in both de novo and salvage pathways of dTTP synthesis. The protein is Thymidylate kinase of Nostoc sp. (strain PCC 7120 / SAG 25.82 / UTEX 2576).